Here is a 274-residue protein sequence, read N- to C-terminus: Shikimate dehydrogenase (NADP(+)) (274 aa).

Residues 15–17 (SKS) and T62 each bind shikimate. K66 functions as the Proton acceptor in the catalytic mechanism. NADP(+) is bound at residue D78. Residues N87 and D102 each contribute to the shikimate site. Residues 127-131 (GAGGA) and M215 contribute to the NADP(+) site. Y217 provides a ligand contact to shikimate. NADP(+) is bound at residue G239.

It belongs to the shikimate dehydrogenase family. Homodimer.

The enzyme catalyses shikimate + NADP(+) = 3-dehydroshikimate + NADPH + H(+). Its pathway is metabolic intermediate biosynthesis; chorismate biosynthesis; chorismate from D-erythrose 4-phosphate and phosphoenolpyruvate: step 4/7. Functionally, involved in the biosynthesis of the chorismate, which leads to the biosynthesis of aromatic amino acids. Catalyzes the reversible NADPH linked reduction of 3-dehydroshikimate (DHSA) to yield shikimate (SA). The chain is Shikimate dehydrogenase (NADP(+)) from Dechloromonas aromatica (strain RCB).